Reading from the N-terminus, the 318-residue chain is Biotin synthase (318 aa).

The region spanning 44 to 273 (LCGNKFDLCT…TVQIRLAGGR (230 aa)) is the Radical SAM core domain. [4Fe-4S] cluster contacts are provided by Cys62, Cys66, and Cys69. [2Fe-2S] cluster is bound by residues Ser106, Cys138, Cys198, and Arg268.

Belongs to the radical SAM superfamily. Biotin synthase family. In terms of assembly, homodimer. [4Fe-4S] cluster serves as cofactor. It depends on [2Fe-2S] cluster as a cofactor.

It catalyses the reaction (4R,5S)-dethiobiotin + (sulfur carrier)-SH + 2 reduced [2Fe-2S]-[ferredoxin] + 2 S-adenosyl-L-methionine = (sulfur carrier)-H + biotin + 2 5'-deoxyadenosine + 2 L-methionine + 2 oxidized [2Fe-2S]-[ferredoxin]. Its pathway is cofactor biosynthesis; biotin biosynthesis; biotin from 7,8-diaminononanoate: step 2/2. In terms of biological role, catalyzes the conversion of dethiobiotin (DTB) to biotin by the insertion of a sulfur atom into dethiobiotin via a radical-based mechanism. The sequence is that of Biotin synthase from Clostridium botulinum (strain Hall / ATCC 3502 / NCTC 13319 / Type A).